The following is a 413-amino-acid chain: Snake venom metalloproteinase AaPA (413 aa).

The N-terminal stretch at 1-20 (MIQVLLVTICLAAFPYQGSS) is a signal peptide. The propeptide occupies 21 to 189 (IILESGKVND…KKASQLIVST (169 aa)). The 198-residue stretch at 193–390 (RYMEIVIVVD…ENPPCILNKP (198 aa)) folds into the Peptidase M12B domain. Glutamate 196 and aspartate 280 together coordinate Ca(2+). Intrachain disulfides connect cysteine 304-cysteine 385, cysteine 344-cysteine 369, and cysteine 346-cysteine 352. Histidine 329 provides a ligand contact to Zn(2+). Glutamate 330 is an active-site residue. Positions 333 and 339 each coordinate Zn(2+). Ca(2+)-binding residues include cysteine 385, asparagine 388, valine 400, asparagine 403, leucine 405, glutamate 407, and aspartate 413. The propeptide occupies 391-413 (LRTDTVSTPVSGNELLEAEKDYD).

It belongs to the venom metalloproteinase (M12B) family. P-I subfamily. Monomer. It depends on Zn(2+) as a cofactor. As to expression, expressed by the venom gland.

Its subcellular location is the secreted. Functionally, snake venom zinc metalloprotease that may activate prothrombin. The sequence is that of Snake venom metalloproteinase AaPA from Deinagkistrodon acutus (Hundred-pace snake).